The sequence spans 91 residues: Small ribosomal subunit protein bS16 (91 aa).

This sequence belongs to the bacterial ribosomal protein bS16 family.

This Lacticaseibacillus casei (strain BL23) (Lactobacillus casei) protein is Small ribosomal subunit protein bS16.